We begin with the raw amino-acid sequence, 166 residues long: NADH-quinone oxidoreductase subunit A (166 aa).

3 helical membrane-spanning segments follow: residues 16–36 (FAVFLIGAVGLCGLMLLGAYF), 68–88 (FYLVAMFFVIFDVEALYLYAW), and 98–118 (IGFIEAVIFILVLLAGLFYLV). The tract at residues 141–166 (RYASSHPQDISQELSVAGSQQANESR) is disordered.

The protein belongs to the complex I subunit 3 family. In terms of assembly, NDH-1 is composed of 13 different subunits. Subunits NuoA, H, J, K, L, M, N constitute the membrane sector of the complex.

The protein localises to the cell inner membrane. The catalysed reaction is a quinone + NADH + 5 H(+)(in) = a quinol + NAD(+) + 4 H(+)(out). Functionally, NDH-1 shuttles electrons from NADH, via FMN and iron-sulfur (Fe-S) centers, to quinones in the respiratory chain. The immediate electron acceptor for the enzyme in this species is believed to be ubiquinone. Couples the redox reaction to proton translocation (for every two electrons transferred, four hydrogen ions are translocated across the cytoplasmic membrane), and thus conserves the redox energy in a proton gradient. The sequence is that of NADH-quinone oxidoreductase subunit A from Yersinia pseudotuberculosis serotype IB (strain PB1/+).